The sequence spans 339 residues: U11/U12 small nuclear ribonucleoprotein 48 kDa protein (339 aa).

A CHHC U11-48K-type zinc finger spans residues 55 to 82 (VVICPYDSNHHMPKSSLAKHMASCRLRK). Cysteine 58, histidine 64, histidine 74, and cysteine 78 together coordinate Zn(2+). Residues lysine 87 and lysine 104 each participate in a glycyl lysine isopeptide (Lys-Gly) (interchain with G-Cter in SUMO2) cross-link. The tract at residues 255–339 (HWQEEQEKAE…HSHKRRKQKI (85 aa)) is disordered. Residues 294–309 (RHRRDRSRSPHKRKRN) show a composition bias toward basic residues. Over residues 310–328 (KDKDKNCESRRRKERDGER) the composition is skewed to basic and acidic residues. A compositionally biased stretch (basic residues) spans 329 to 339 (HHSHKRRKQKI).

Component of the U11/U12 snRNPs that are part of the U12-type spliceosome. Not found in the major spliceosome.

It localises to the nucleus. Its function is as follows. Likely involved in U12-type 5' splice site recognition. The chain is U11/U12 small nuclear ribonucleoprotein 48 kDa protein (SNRNP48) from Homo sapiens (Human).